Consider the following 244-residue polypeptide: Extracellular superoxide dismutase [Cu-Zn] (244 aa).

The N-terminal stretch at 1–18 (MLALVCSCLLLAALPADT) is a signal peptide. Intrachain disulfides connect C67–C212 and C129–C211. N111 carries N-linked (GlcNAc...) asparagine glycosylation. 3 residues coordinate Cu cation: H118, H120, and H135. Residues H135, H143, H146, and D149 each coordinate Zn(2+). H185 contributes to the Cu cation binding site. Residues 221 to 244 (PWARQAQEHAERKKRRRESECKAA) form a disordered region. Over residues 226–244 (AQEHAERKKRRRESECKAA) the composition is skewed to basic and acidic residues.

The protein belongs to the Cu-Zn superoxide dismutase family. In terms of assembly, homotetramer. Directly interacts with ATP7A; this interaction is copper-dependent and is required for SOD3 activity. Requires Cu cation as cofactor. Zn(2+) serves as cofactor.

Its subcellular location is the secreted. The protein resides in the extracellular space. It is found in the golgi apparatus. It localises to the trans-Golgi network. The catalysed reaction is 2 superoxide + 2 H(+) = H2O2 + O2. Its function is as follows. Protect the extracellular space from toxic effect of reactive oxygen intermediates by converting superoxide radicals into hydrogen peroxide and oxygen. This is Extracellular superoxide dismutase [Cu-Zn] (SOD3) from Oryctolagus cuniculus (Rabbit).